The chain runs to 125 residues: Late expression factor 11 (125 aa).

Belongs to the baculoviridae LEF-11 family.

Its function is as follows. Involved in late/very late gene activation. The chain is Late expression factor 11 (LEF-11) from Orgyia pseudotsugata multicapsid polyhedrosis virus (OpMNPV).